A 163-amino-acid polypeptide reads, in one-letter code: MSQLPLASQATTTDLVSTTAMQPQSEGIVDESLQPQHPPSSTAHDSPCLQDSVPLVPPPPSPYLNKEVGQMVCGSCRILLAYFRGAGYVHCTCCQTMNYVLEAHEVGKVHCGHCATLLMYPFGAPAVKCSLCLFVTEIGERNVRRRLSIEQPTRTNSSGLAEA.

Polar residues-rich tracts occupy residues 1–25 (MSQL…QPQS) and 33–44 (LQPQHPPSSTAH). A disordered region spans residues 1-51 (MSQLPLASQATTTDLVSTTAMQPQSEGIVDESLQPQHPPSSTAHDSPCLQD). 2 putative zinc finger regions span residues 70 to 100 (QMVC…MNYV) and 108 to 138 (KVHC…VTEI).

The protein resides in the nucleus. Functionally, involved in plant growth and disease resistance. This Oryza sativa subsp. japonica (Rice) protein is Protein LOL5 (LOL5).